The following is an 87-amino-acid chain: Large ribosomal subunit protein bL31B (87 aa).

It belongs to the bacterial ribosomal protein bL31 family. Type B subfamily. As to quaternary structure, part of the 50S ribosomal subunit.

The polypeptide is Large ribosomal subunit protein bL31B (Halorhodospira halophila (strain DSM 244 / SL1) (Ectothiorhodospira halophila (strain DSM 244 / SL1))).